Consider the following 1024-residue polypeptide: Error-prone DNA polymerase (1024 aa).

Belongs to the DNA polymerase type-C family. DnaE2 subfamily.

The protein localises to the cytoplasm. The enzyme catalyses DNA(n) + a 2'-deoxyribonucleoside 5'-triphosphate = DNA(n+1) + diphosphate. Its function is as follows. DNA polymerase involved in damage-induced mutagenesis and translesion synthesis (TLS). It is not the major replicative DNA polymerase. This chain is Error-prone DNA polymerase, found in Vibrio parahaemolyticus serotype O3:K6 (strain RIMD 2210633).